The following is a 364-amino-acid chain: Aminomethyltransferase (364 aa).

The protein belongs to the GcvT family. As to quaternary structure, the glycine cleavage system is composed of four proteins: P, T, L and H.

It catalyses the reaction N(6)-[(R)-S(8)-aminomethyldihydrolipoyl]-L-lysyl-[protein] + (6S)-5,6,7,8-tetrahydrofolate = N(6)-[(R)-dihydrolipoyl]-L-lysyl-[protein] + (6R)-5,10-methylene-5,6,7,8-tetrahydrofolate + NH4(+). Functionally, the glycine cleavage system catalyzes the degradation of glycine. The chain is Aminomethyltransferase from Enterobacter sp. (strain 638).